The following is a 498-amino-acid chain: L-xylulose/3-keto-L-gulonate kinase (498 aa).

Belongs to the FGGY kinase family. In terms of assembly, homodimer.

It catalyses the reaction L-xylulose + ATP = L-xylulose 5-phosphate + ADP + H(+). It carries out the reaction 3-dehydro-L-gulonate + ATP = 3-dehydro-L-gulonate 6-phosphate + ADP + H(+). Its function is as follows. Catalyzes the phosphorylation of L-xylulose and 3-keto-L-gulonate. Is involved in L-lyxose utilization via xylulose, and may also be involved in the utilization of 2,3-diketo-L-gulonate. The chain is L-xylulose/3-keto-L-gulonate kinase (lyx) from Escherichia coli (strain K12).